We begin with the raw amino-acid sequence, 228 residues long: Deoxyribose-phosphate aldolase (228 aa).

D96 acts as the Proton donor/acceptor in catalysis. K157 (schiff-base intermediate with acetaldehyde) is an active-site residue. K185 (proton donor/acceptor) is an active-site residue.

It belongs to the DeoC/FbaB aldolase family. DeoC type 1 subfamily.

It is found in the cytoplasm. The enzyme catalyses 2-deoxy-D-ribose 5-phosphate = D-glyceraldehyde 3-phosphate + acetaldehyde. Its pathway is carbohydrate degradation; 2-deoxy-D-ribose 1-phosphate degradation; D-glyceraldehyde 3-phosphate and acetaldehyde from 2-deoxy-alpha-D-ribose 1-phosphate: step 2/2. Its function is as follows. Catalyzes a reversible aldol reaction between acetaldehyde and D-glyceraldehyde 3-phosphate to generate 2-deoxy-D-ribose 5-phosphate. The polypeptide is Deoxyribose-phosphate aldolase (Cyanothece sp. (strain PCC 7425 / ATCC 29141)).